The sequence spans 486 residues: 3-dehydroshikimate dehydratase (486 aa).

It carries out the reaction 3-dehydroshikimate = 3,4-dihydroxybenzoate + H2O. It participates in aromatic compound metabolism; 3,4-dihydroxybenzoate biosynthesis; 3,4-dihydroxybenzoate from 3-dehydroquinate: step 2/2. Its function is as follows. Converts dehydroshikimate to protocatechuate. The protein is 3-dehydroshikimate dehydratase (quiC) of Acinetobacter baylyi (strain ATCC 33305 / BD413 / ADP1).